A 166-amino-acid polypeptide reads, in one-letter code: Lipoprotein signal peptidase (166 aa).

The next 3 helical transmembrane spans lie at 12-32 (WLWV…LILQ), 70-90 (WFFS…MYRS), and 102-122 (ALII…GFVV). Residues aspartate 123 and aspartate 141 contribute to the active site. Residues 137–157 (FNLADSAICIGAALIVLEGFL) form a helical membrane-spanning segment.

Belongs to the peptidase A8 family.

It is found in the cell inner membrane. The catalysed reaction is Release of signal peptides from bacterial membrane prolipoproteins. Hydrolyzes -Xaa-Yaa-Zaa-|-(S,diacylglyceryl)Cys-, in which Xaa is hydrophobic (preferably Leu), and Yaa (Ala or Ser) and Zaa (Gly or Ala) have small, neutral side chains.. Its pathway is protein modification; lipoprotein biosynthesis (signal peptide cleavage). Functionally, this protein specifically catalyzes the removal of signal peptides from prolipoproteins. This chain is Lipoprotein signal peptidase, found in Klebsiella pneumoniae (strain 342).